The sequence spans 527 residues: Peptide chain release factor 3 (527 aa).

A tr-type G domain is found at 9–278; that stretch reads NKRRTFAIIS…GLTQWAPKPQ (270 aa). GTP is bound by residues 18 to 25, 86 to 90, and 140 to 143; these read SHPDAGKT, DTPGH, and NKLD.

The protein belongs to the TRAFAC class translation factor GTPase superfamily. Classic translation factor GTPase family. PrfC subfamily.

Its subcellular location is the cytoplasm. In terms of biological role, increases the formation of ribosomal termination complexes and stimulates activities of RF-1 and RF-2. It binds guanine nucleotides and has strong preference for UGA stop codons. It may interact directly with the ribosome. The stimulation of RF-1 and RF-2 is significantly reduced by GTP and GDP, but not by GMP. This Haemophilus influenzae (strain PittEE) protein is Peptide chain release factor 3.